Here is a 152-residue protein sequence, read N- to C-terminus: Small ribosomal subunit protein uS13 (152 aa).

Belongs to the universal ribosomal protein uS13 family. In terms of assembly, component of the small ribosomal subunit.

Its subcellular location is the cytoplasm. Component of the small ribosomal subunit. The ribosome is a large ribonucleoprotein complex responsible for the synthesis of proteins in the cell. The sequence is that of Small ribosomal subunit protein uS13 (rps18) from Ictalurus punctatus (Channel catfish).